A 108-amino-acid chain; its full sequence is Cytochrome c (108 aa).

Positions 19, 22, 23, and 85 each coordinate heme c.

Belongs to the cytochrome c family. Binds 1 heme c group covalently per subunit.

Its subcellular location is the mitochondrion intermembrane space. Its function is as follows. Electron carrier protein. The oxidized form of the cytochrome c heme group can accept an electron from the heme group of the cytochrome c1 subunit of cytochrome reductase. Cytochrome c then transfers this electron to the cytochrome oxidase complex, the final protein carrier in the mitochondrial electron-transport chain. The protein is Cytochrome c of Stellaria longipes (Longstalk starwort).